The following is a 402-amino-acid chain: Mediator of RNA polymerase II transcription subunit 27 (402 aa).

Over residues 1–23 the composition is skewed to polar residues; that stretch reads MQTLHQSQLLQNPAEAANNQSES. Positions 1 to 30 are disordered; it reads MQTLHQSQLLQNPAEAANNQSESDAPPKQV. Positions 28-49 form a coiled coil; the sequence is KQVAQAMERLNQAARVIADIRL.

It belongs to the Mediator complex subunit 27 family. Component of the Mediator complex.

Its subcellular location is the nucleus. Its function is as follows. Component of the Mediator complex, a coactivator involved in the regulated transcription of nearly all RNA polymerase II-dependent genes. Mediator functions as a bridge to convey information from gene-specific regulatory proteins to the basal RNA polymerase II transcription machinery. The Mediator complex, having a compact conformation in its free form, is recruited to promoters by direct interactions with regulatory proteins and serves for the assembly of a functional preinitiation complex with RNA polymerase II and the general transcription factors. This Arabidopsis thaliana (Mouse-ear cress) protein is Mediator of RNA polymerase II transcription subunit 27 (MED27).